Here is a 703-residue protein sequence, read N- to C-terminus: Polyribonucleotide nucleotidyltransferase (703 aa).

Aspartate 486 and aspartate 492 together coordinate Mg(2+). Positions 554 to 613 (PKIITTNIDPEKIRDVIGPGGKMINKIIAETGVKIDIEEDGRVYILTPDSAAAQKALKII) constitute a KH domain. The 69-residue stretch at 623 to 691 (GEVYLGKVVR…KQGRINLSRK (69 aa)) folds into the S1 motif domain.

It belongs to the polyribonucleotide nucleotidyltransferase family. Requires Mg(2+) as cofactor.

The protein resides in the cytoplasm. It carries out the reaction RNA(n+1) + phosphate = RNA(n) + a ribonucleoside 5'-diphosphate. Functionally, involved in mRNA degradation. Catalyzes the phosphorolysis of single-stranded polyribonucleotides processively in the 3'- to 5'-direction. The sequence is that of Polyribonucleotide nucleotidyltransferase from Ruminiclostridium cellulolyticum (strain ATCC 35319 / DSM 5812 / JCM 6584 / H10) (Clostridium cellulolyticum).